We begin with the raw amino-acid sequence, 437 residues long: ATP-dependent RNA helicase RhlB (437 aa).

The Q motif signature appears at 9-37 (QKFADLGLEPTVLEGLDAQGFHYCTPIQA). The Helicase ATP-binding domain maps to 40-219 (LPVVLTGQDI…FEHMNSPESV (180 aa)). 53–60 (AQTGTGKT) contacts ATP. Positions 165–168 (DEAD) match the DEAD box motif. The Helicase C-terminal domain occupies 245–390 (RLLQTLIEEE…LSKYNSEALL (146 aa)). The interval 395-437 (APLRLQRTPRQGGNRRPNGNRQGQGQSRPRNNNRRHPQSQKQQ) is disordered. The segment covering 400–424 (QRTPRQGGNRRPNGNRQGQGQSRPR) has biased composition (low complexity). Residues 425–437 (NNNRRHPQSQKQQ) show a composition bias toward basic residues.

Belongs to the DEAD box helicase family. RhlB subfamily. As to quaternary structure, component of the RNA degradosome, which is a multiprotein complex involved in RNA processing and mRNA degradation.

It is found in the cytoplasm. The catalysed reaction is ATP + H2O = ADP + phosphate + H(+). Its function is as follows. DEAD-box RNA helicase involved in RNA degradation. Has RNA-dependent ATPase activity and unwinds double-stranded RNA. This chain is ATP-dependent RNA helicase RhlB, found in Photobacterium profundum (strain SS9).